The chain runs to 310 residues: Transcription factor MYB53 (310 aa).

HTH myb-type domains are found at residues 9-61 (ETGL…TNYL) and 62-116 (RPDI…KKKL). DNA-binding regions (H-T-H motif) lie at residues 37 to 61 (WSAL…TNYL) and 89 to 112 (WSMI…NTHL).

Interacts with FBX5. Highly expressed in roots and at lower levels in leaves, stems and flowers.

It localises to the nucleus. Functionally, probable transcription factor. In Arabidopsis thaliana (Mouse-ear cress), this protein is Transcription factor MYB53.